A 493-amino-acid polypeptide reads, in one-letter code: Cytoplasmic tRNA 2-thiolation protein 2 (493 aa).

S489 is subject to Phosphoserine.

This sequence belongs to the CTU2/NCS2 family. In terms of assembly, interacts with NCS6 and URM1. May act by forming a heterodimer with NCS6.

It is found in the cytoplasm. It participates in tRNA modification; 5-methoxycarbonylmethyl-2-thiouridine-tRNA biosynthesis. In terms of biological role, plays a central role in 2-thiolation of mcm(5)S(2)U at tRNA wobble positions of tRNA(Lys), tRNA(Glu) and tRNA(Gln). May act by forming a heterodimer with NCS6 that ligates sulfur from thiocarboxylated URM1 onto the uridine of tRNAs at wobble position. Prior mcm(5) tRNA modification by the elongator complex is required for 2-thiolation. May also be involved in protein urmylation. The polypeptide is Cytoplasmic tRNA 2-thiolation protein 2 (Saccharomyces cerevisiae (strain YJM789) (Baker's yeast)).